We begin with the raw amino-acid sequence, 400 residues long: Telomeric repeat-binding factor 2-interacting protein 1 (400 aa).

At A2 the chain carries N-acetylalanine. Residues S36 and S43 each carry the phosphoserine modification. The 24-residue stretch at 78–101 (FISTQYILDCVERNERLELEAYRL) folds into the BRCT domain. A disordered region spans residues 105–126 (SAADTGSEAKPGALAEGAAEPE). Over residues 112–125 (EAKPGALAEGAAEP) the composition is skewed to low complexity. A Glycyl lysine isopeptide (Lys-Gly) (interchain with G-Cter in SUMO2) cross-link involves residue K114. Residues 128 to 188 (QRLAGRIAFT…SLKDRYLKHL (61 aa)) form the Myb-like domain. S154 and S156 each carry phosphoserine. Residue K194 forms a Glycyl lysine isopeptide (Lys-Gly) (interchain with G-Cter in SUMO2) linkage. Disordered stretches follow at residues 196-244 (LLGD…EEIQ) and 264-311 (VVVD…SQPE). Phosphoserine occurs at positions 203 and 206. Glycyl lysine isopeptide (Lys-Gly) (interchain with G-Cter in SUMO2) cross-links involve residues K208, K212, and K240. The span at 280-305 (CDDDPPTPEEDSETQPDEEEEEEEEE) shows a compositional bias: acidic residues. A Glycyl lysine isopeptide (Lys-Gly) (interchain with G-Cter in SUMO2) cross-link involves residue K373. The Nuclear localization signal signature appears at 384–400 (KKFGAQNVARRIEFRKK).

The protein belongs to the RAP1 family. In terms of assembly, associates with the I-kappa-B-kinase (IKK) core complex, composed of CHUK, IKBKB and IKBKG. Homodimer. Component of the shelterin complex (telosome) composed of TERF1, TERF2, TINF2, TERF2IP ACD and POT1. Interacts with TERF2 (but not TERF1) with its C-terminus. Interacts with SLX4/BTBD12. Interacts with TERF2; the interaction is direct.

It is found in the nucleus. The protein localises to the cytoplasm. It localises to the chromosome. The protein resides in the telomere. Its function is as follows. Acts both as a regulator of telomere function and as a transcription regulator. Involved in the regulation of telomere length and protection as a component of the shelterin complex (telosome). In contrast to other components of the shelterin complex, it is dispensible for telomere capping and does not participate in the protection of telomeres against non-homologous end-joining (NHEJ)-mediated repair. Instead, it is required to negatively regulate telomere recombination and is essential for repressing homology-directed repair (HDR), which can affect telomere length. Does not bind DNA directly: recruited to telomeric double-stranded 5'-TTAGGG-3' repeats via its interaction with TERF2. Independently of its function in telomeres, also acts as a transcription regulator: recruited to extratelomeric 5'-TTAGGG-3' sites via its association with TERF2 or other factors, and regulates gene expression. When cytoplasmic, associates with the I-kappa-B-kinase (IKK) complex and acts as a regulator of the NF-kappa-B signaling by promoting IKK-mediated phosphorylation of RELA/p65, leading to activate expression of NF-kappa-B target genes. This chain is Telomeric repeat-binding factor 2-interacting protein 1 (TERF2IP), found in Macaca fascicularis (Crab-eating macaque).